The following is a 343-amino-acid chain: Phosphate acyltransferase (343 aa).

This sequence belongs to the PlsX family. In terms of assembly, homodimer. Probably interacts with PlsY.

The protein resides in the cytoplasm. The enzyme catalyses a fatty acyl-[ACP] + phosphate = an acyl phosphate + holo-[ACP]. It functions in the pathway lipid metabolism; phospholipid metabolism. Catalyzes the reversible formation of acyl-phosphate (acyl-PO(4)) from acyl-[acyl-carrier-protein] (acyl-ACP). This enzyme utilizes acyl-ACP as fatty acyl donor, but not acyl-CoA. The protein is Phosphate acyltransferase of Neorickettsia sennetsu (strain ATCC VR-367 / Miyayama) (Ehrlichia sennetsu).